The chain runs to 333 residues: Casein kinase II subunit beta-1 (333 aa).

The span at Val-58–Ser-78 shows a compositional bias: acidic residues. Disordered regions lie at residues Val-58–His-92 and Ala-282–Leu-333. Basic residues predominate over residues Ala-305–Lys-316.

This sequence belongs to the casein kinase 2 subunit beta family. As to quaternary structure, tetramer composed of two alpha chains, one beta chain and one beta' chain. In terms of processing, phosphorylated by alpha subunit.

Functionally, regulatory subunit of casein kinase II/CK2. As part of the kinase complex regulates the basal catalytic activity of the alpha subunit a constitutively active serine/threonine-protein kinase that phosphorylates a large number of substrates containing acidic residues C-terminal to the phosphorylated serine or threonine. This Neurospora crassa (strain ATCC 24698 / 74-OR23-1A / CBS 708.71 / DSM 1257 / FGSC 987) protein is Casein kinase II subunit beta-1 (ckb-1).